The primary structure comprises 83 residues: Cell division topological specificity factor (83 aa).

It belongs to the MinE family.

In terms of biological role, prevents the cell division inhibition by proteins MinC and MinD at internal division sites while permitting inhibition at polar sites. This ensures cell division at the proper site by restricting the formation of a division septum at the midpoint of the long axis of the cell. The protein is Cell division topological specificity factor of Buchnera aphidicola subsp. Baizongia pistaciae (strain Bp).